We begin with the raw amino-acid sequence, 374 residues long: Peptide chain release factor 2 (374 aa).

Glutamine 250 carries the post-translational modification N5-methylglutamine.

Belongs to the prokaryotic/mitochondrial release factor family. Post-translationally, methylated by PrmC. Methylation increases the termination efficiency of RF2.

Its subcellular location is the cytoplasm. Peptide chain release factor 2 directs the termination of translation in response to the peptide chain termination codons UGA and UAA. The chain is Peptide chain release factor 2 from Beutenbergia cavernae (strain ATCC BAA-8 / DSM 12333 / CCUG 43141 / JCM 11478 / NBRC 16432 / NCIMB 13614 / HKI 0122).